The primary structure comprises 128 residues: NADH-quinone oxidoreductase subunit A (128 aa).

A run of 3 helical transmembrane segments spans residues 5–25, 72–92, and 100–120; these read IPIL…VVIA, LTAM…PWAV, and FALV…AYVW.

The protein belongs to the complex I subunit 3 family. In terms of assembly, NDH-1 is composed of 14 different subunits. Subunits NuoA, H, J, K, L, M, N constitute the membrane sector of the complex.

The protein resides in the cell membrane. The catalysed reaction is a quinone + NADH + 5 H(+)(in) = a quinol + NAD(+) + 4 H(+)(out). In terms of biological role, NDH-1 shuttles electrons from NADH, via FMN and iron-sulfur (Fe-S) centers, to quinones in the respiratory chain. The immediate electron acceptor for the enzyme in this species is believed to be a menaquinone. Couples the redox reaction to proton translocation (for every two electrons transferred, four hydrogen ions are translocated across the cytoplasmic membrane), and thus conserves the redox energy in a proton gradient. The protein is NADH-quinone oxidoreductase subunit A of Mycobacterium bovis (strain ATCC BAA-935 / AF2122/97).